A 353-amino-acid polypeptide reads, in one-letter code: uncharacterized protein (353 aa).

The N-terminal stretch at 1–23 (MSAGKGLLLVICLLFLPLKSAMA) is a signal peptide.

To E.coli YqiI.

May be involved in a fimbrial system chaperoned by YbgP and exported by YbgQ. This is an uncharacterized protein from Escherichia coli (strain K12).